Consider the following 107-residue polypeptide: Putative ankyrin repeat protein L14 (107 aa).

ANK repeat units lie at residues 19–48 (DNNYVVRPTSIKVYIEVVKYLVSQGANIRA), 49–78 (DNDCAVRFASRNGHLEVVKYLVSLGANIRA), and 80–107 (NDCAVRWASRNGHLDVVEYLVSLGAVLS).

The protein is Putative ankyrin repeat protein L14 of Acanthamoeba polyphaga (Amoeba).